A 529-amino-acid polypeptide reads, in one-letter code: Peptide chain release factor 3 (529 aa).

Residues 11-280 (AKRRTFAIIS…GLVEWAPAPM (270 aa)) enclose the tr-type G domain. GTP contacts are provided by residues 20–27 (SHPDAGKT), 88–92 (DTPGH), and 142–145 (NKLD).

Belongs to the TRAFAC class translation factor GTPase superfamily. Classic translation factor GTPase family. PrfC subfamily.

It localises to the cytoplasm. Its function is as follows. Increases the formation of ribosomal termination complexes and stimulates activities of RF-1 and RF-2. It binds guanine nucleotides and has strong preference for UGA stop codons. It may interact directly with the ribosome. The stimulation of RF-1 and RF-2 is significantly reduced by GTP and GDP, but not by GMP. The chain is Peptide chain release factor 3 from Escherichia coli O8 (strain IAI1).